The following is a 437-amino-acid chain: GTPase Der (437 aa).

EngA-type G domains follow at residues 4–168 (NIVA…PEKP) and 178–353 (PRFA…ENRK). GTP is bound by residues 10 to 17 (GRPNVGKS), 57 to 61 (DTGGY), 120 to 123 (NKVD), 184 to 191 (GRPNAGKS), 231 to 235 (DTAGI), and 296 to 299 (NKWD). Positions 354–437 (QRISTSKFNE…VPIDIYIREK (84 aa)) constitute a KH-like domain.

This sequence belongs to the TRAFAC class TrmE-Era-EngA-EngB-Septin-like GTPase superfamily. EngA (Der) GTPase family. Associates with the 50S ribosomal subunit.

In terms of biological role, GTPase that plays an essential role in the late steps of ribosome biogenesis. The protein is GTPase Der of Flavobacterium johnsoniae (strain ATCC 17061 / DSM 2064 / JCM 8514 / BCRC 14874 / CCUG 350202 / NBRC 14942 / NCIMB 11054 / UW101) (Cytophaga johnsonae).